The primary structure comprises 205 residues: Large ribosomal subunit protein uL4 (205 aa).

The disordered stretch occupies residues 54 to 78 (GDISGTTAKPHRQKHTGRARQGSLR). Residues 62–71 (KPHRQKHTGR) are compositionally biased toward basic residues.

This sequence belongs to the universal ribosomal protein uL4 family. In terms of assembly, part of the 50S ribosomal subunit.

Its function is as follows. One of the primary rRNA binding proteins, this protein initially binds near the 5'-end of the 23S rRNA. It is important during the early stages of 50S assembly. It makes multiple contacts with different domains of the 23S rRNA in the assembled 50S subunit and ribosome. Forms part of the polypeptide exit tunnel. This chain is Large ribosomal subunit protein uL4, found in Ehrlichia chaffeensis (strain ATCC CRL-10679 / Arkansas).